We begin with the raw amino-acid sequence, 59 residues long: Protein HOR7 (59 aa).

Residues 1 to 19 form the signal peptide; sequence MKLSQVVVSAVAFTGLVSA.

To yeast DDR2.

This chain is Protein HOR7 (HOR7), found in Saccharomyces cerevisiae (strain ATCC 204508 / S288c) (Baker's yeast).